A 197-amino-acid chain; its full sequence is Thymidine kinase (197 aa).

Residues 15-22 and 93-96 each bind ATP; these read GPMFAGKT and DEVQ. E94 functions as the Proton acceptor in the catalytic mechanism. Positions 150, 153, 188, and 191 each coordinate Zn(2+).

The protein belongs to the thymidine kinase family. As to quaternary structure, homotetramer.

It localises to the cytoplasm. It carries out the reaction thymidine + ATP = dTMP + ADP + H(+). The chain is Thymidine kinase from Thermococcus kodakarensis (strain ATCC BAA-918 / JCM 12380 / KOD1) (Pyrococcus kodakaraensis (strain KOD1)).